We begin with the raw amino-acid sequence, 477 residues long: V-type proton ATPase subunit B (477 aa).

ATP is bound at residue R365.

Belongs to the ATPase alpha/beta chains family. In terms of assembly, V-ATPase is a heteromultimeric enzyme composed of a peripheral catalytic V1 complex (components A to H) attached to an integral membrane V0 proton pore complex (components: a, c, c', c'', d, e, f and VOA1).

It localises to the vacuole membrane. In terms of biological role, non-catalytic subunit of the V1 complex of vacuolar(H+)-ATPase (V-ATPase), a multisubunit enzyme composed of a peripheral complex (V1) that hydrolyzes ATP and a membrane integral complex (V0) that translocates protons. V-ATPase is responsible for acidifying and maintaining the pH of intracellular compartments. The sequence is that of V-type proton ATPase subunit B from Encephalitozoon cuniculi (strain GB-M1) (Microsporidian parasite).